The primary structure comprises 170 residues: Large ribosomal subunit protein uL5 (170 aa).

The protein belongs to the universal ribosomal protein uL5 family. In terms of assembly, part of the 50S ribosomal subunit; contacts the 5S rRNA and probably tRNA. Forms a bridge to the 30S subunit in the 70S ribosome.

In terms of biological role, this is one of the proteins that bind and probably mediate the attachment of the 5S RNA into the large ribosomal subunit, where it forms part of the central protuberance. In the 70S ribosome it contacts protein S13 of the 30S subunit (bridge B1b), connecting the 2 subunits; this bridge is implicated in subunit movement. May contact the P site tRNA; the 5S rRNA and some of its associated proteins might help stabilize positioning of ribosome-bound tRNAs. In Methanobrevibacter smithii (strain ATCC 35061 / DSM 861 / OCM 144 / PS), this protein is Large ribosomal subunit protein uL5.